Reading from the N-terminus, the 306-residue chain is Ribonuclease Z (306 aa).

7 residues coordinate Zn(2+): H63, H65, D67, H68, H141, D211, and H269. D67 acts as the Proton acceptor in catalysis.

Belongs to the RNase Z family. In terms of assembly, homodimer. The cofactor is Zn(2+).

It carries out the reaction Endonucleolytic cleavage of RNA, removing extra 3' nucleotides from tRNA precursor, generating 3' termini of tRNAs. A 3'-hydroxy group is left at the tRNA terminus and a 5'-phosphoryl group is left at the trailer molecule.. Zinc phosphodiesterase, which displays some tRNA 3'-processing endonuclease activity. Probably involved in tRNA maturation, by removing a 3'-trailer from precursor tRNA. In Staphylococcus aureus (strain MSSA476), this protein is Ribonuclease Z.